We begin with the raw amino-acid sequence, 171 residues long: Probable DNA-directed RNA polymerase subunit delta (171 aa).

The 68-residue stretch at 14–81 folds into the HTH HARE-type domain; that stretch reads MALVEIAYEI…SDQTWGLRSW (68 aa). Positions 138-171 are disordered; sequence EFDEIDEADDDELDDLEDEILDDDEDFDEEEDEE.

This sequence belongs to the RpoE family. RNAP is composed of a core of 2 alpha, a beta and a beta' subunits. The core is associated with a delta subunit and one of several sigma factors.

Participates in both the initiation and recycling phases of transcription. In the presence of the delta subunit, RNAP displays an increased specificity of transcription, a decreased affinity for nucleic acids, and an increased efficiency of RNA synthesis because of enhanced recycling. This Bacillus licheniformis (strain ATCC 14580 / DSM 13 / JCM 2505 / CCUG 7422 / NBRC 12200 / NCIMB 9375 / NCTC 10341 / NRRL NRS-1264 / Gibson 46) protein is Probable DNA-directed RNA polymerase subunit delta.